We begin with the raw amino-acid sequence, 229 residues long: Transmembrane protein 182 (229 aa).

An N-terminal signal peptide occupies residues 1–26 (MRLNIAIFFGALFGALGVLLFLVAFG). The Extracellular segment spans residues 27-114 (SDYWLLATEV…SYDSAVIYRG (88 aa)). N-linked (GlcNAc...) asparagine glycosylation is present at asparagine 47. An interaction with ITGB1 region spans residues 49–59 (TFHHEGFFWRC). Asparagine 102 carries N-linked (GlcNAc...) asparagine glycosylation. A helical transmembrane segment spans residues 115-135 (FWAVLMLLGVVAVVIASFLII). Residues 136-153 (CAAPFASHFLYKAGGGSY) lie on the Cytoplasmic side of the membrane. The helical transmembrane segment at 154 to 174 (IAAGILFSLVVMLYVIWVQAV) threads the bilayer. Over 175–200 (ADMESYRNMKMKDCLDFTPSVLYGWS) the chain is Extracellular. Residues 201–221 (FFLAPAGIFFSLLAGLLFLVV) form a helical membrane-spanning segment. The Cytoplasmic segment spans residues 222 to 229 (GWHIQIHH).

Belongs to the TMEM182 family. Interacts with ITGB1.

The protein resides in the cell membrane. In terms of biological role, negatively regulates myogenesis and skeletal muscle regeneration via its association with ITGB1. Modulates ITGB1 activation by decreasing ITGB1-LAMB1 interaction and inhibiting ITGB1-mediated intracellular signaling during myogenesis. The sequence is that of Transmembrane protein 182 (TMEM182) from Homo sapiens (Human).